The chain runs to 359 residues: MSTVGSSSEGRHSVRCFRHRNANTFLTYSKCPLEPEFIGEHLFRLTREYEPAYILVVRETHTDGTWHCHALLQCIKPCTTRDERYFDIDRYHGNIQSAKSTDKVREYILKDPKDKWEKGTYIPRKKSFVPPGKEPAEKKPTKDEVMREIMTHATSREEYLSLVQSSLPYDWATKLNYFEYSASRLFPDIAEPYTNPHPTTEYDLHCNETIEDWLKPNIYQQNAPGERKRSLYICGPTRTGKTSWARSLGRHNYWQNNIDWSSYDEEAQYNVVDDIPFKFCPCRKRLVGCQKDYIVNPKYGKRRKVASKSIPTIILANEDEDWLKDMTPAHVEYFEANCDQYILLPGEKFYKTGEAGGSI.

The region spanning R18–Y121 is the CRESS-DNA virus Rep endonuclease domain. Positions F25–Y28 match the RCR-1 motif. The a divalent metal cation site is built by E59, H67, and H69. Positions H67–H69 match the RCR-2 motif. The active-site For DNA cleavage activity is Y107. The RCR-3 motif lies at Y107–K110. D111 lines the a divalent metal cation pocket. Residues S181 to Y193 form an oligomerization region. G235 to T242 contacts ATP. Positions I258–P276 are transactivation. Positions K298 to S309 match the Nuclear localization signal motif.

Belongs to the geminiviridae Rep protein family. Homooligomer. Rep binds to repeated DNA motifs (iterons). Forms the O-complex, which is a Rep-DNA complex involved in the initiation of RCR. Part of the C- and V-complexes which are RepA-Rep-DNA complexes involved in the c-sense and v-sense transcription. Mg(2+) is required as a cofactor. Requires Mn(2+) as cofactor.

The protein resides in the host nucleus. Essential for the replication of viral ssDNA. The closed circular ssDNA genome is first converted to a superhelical dsDNA. Rep binds a specific region at the genome origin of replication. It introduces an endonucleolytic nick within the conserved sequence 5'-TAATATTAC-3' in the intergenic region of the genome present in all geminiviruses, thereby initiating the rolling circle replication (RCR). Following cleavage, binds covalently to the 5'-phosphate of DNA as a tyrosyl ester. The cleavage gives rise to a free 3'-OH that serves as a primer for the cellular DNA polymerase. The polymerase synthesizes the (+) strand DNA by rolling circle mechanism. After one round of replication, a Rep-catalyzed nucleotidyl transfer reaction releases a circular single-stranded virus genome, thereby terminating the replication. Displays origin-specific DNA cleavage, nucleotidyl transferase, ATPase and helicase activities. Acts as an inhibitor of C-sense gene transcription. The protein is Replication-associated protein of Megathyrsus maximus (PanSV).